We begin with the raw amino-acid sequence, 729 residues long: Catalase-peroxidase (729 aa).

Residues 1–26 (MTMDQKTDNAGKCPVAHTAPRGRSNR) are disordered. The tryptophyl-tyrosyl-methioninium (Trp-Tyr) (with M-245) cross-link spans 97–219 (WHSAGTYRIT…LAAVQMGLIY (123 aa)). The active-site Proton acceptor is the H98. Positions 219-245 (YVNPEGPNGNPDPVAAAHDIRETFARM) form a cross-link, tryptophyl-tyrosyl-methioninium (Tyr-Met) (with W-97). A heme b-binding site is contributed by H260.

Belongs to the peroxidase family. Peroxidase/catalase subfamily. As to quaternary structure, homodimer or homotetramer. Heme b is required as a cofactor. In terms of processing, formation of the three residue Trp-Tyr-Met cross-link is important for the catalase, but not the peroxidase activity of the enzyme.

It carries out the reaction H2O2 + AH2 = A + 2 H2O. It catalyses the reaction 2 H2O2 = O2 + 2 H2O. Functionally, bifunctional enzyme with both catalase and broad-spectrum peroxidase activity. The chain is Catalase-peroxidase from Sinorhizobium medicae (strain WSM419) (Ensifer medicae).